The chain runs to 143 residues: MNKTYMANPQNVERKWYVVDAEGKTLGRLASKVAAILRGKHKPTFTPHVDCGDFVIIVNAEKIQVTGKKVTDKVYYRHSGYPGGQKATTFEQMIARRPERVLELAIKGMLPHNRLGRQMYRKLKVYAGPEHPHAAQKPEPLEV.

It belongs to the universal ribosomal protein uL13 family. As to quaternary structure, part of the 50S ribosomal subunit.

This protein is one of the early assembly proteins of the 50S ribosomal subunit, although it is not seen to bind rRNA by itself. It is important during the early stages of 50S assembly. The polypeptide is Large ribosomal subunit protein uL13 (Symbiobacterium thermophilum (strain DSM 24528 / JCM 14929 / IAM 14863 / T)).